A 157-amino-acid chain; its full sequence is MDYTIEHVLTRKIAGFHLVGPWEKTVPQGFEQLSLWVDNFHIQPQAWLAVYYDNPQQVAPEKLRADTVVEVPADFTLPENSVGVILTDLPGGQYAVARARVENNDFGTPWLAFFTRLHQDVRYQMAARPCFEIYLNDGKRDGYWDIDMYIPVQTSGE.

It belongs to the DNA gyrase inhibitor family. Interacts with DNA gyrase.

It localises to the cytoplasm. Its function is as follows. Inhibits the supercoiling activity of DNA gyrase. Acts by inhibiting DNA gyrase at an early step, prior to (or at the step of) binding of DNA by the gyrase. It protects cells against toxins that target DNA gyrase, by inhibiting activity of these toxins and reducing the formation of lethal double-strand breaks in the cell. The sequence is that of DNA gyrase inhibitor from Cronobacter sakazakii (strain ATCC BAA-894) (Enterobacter sakazakii).